The primary structure comprises 351 residues: DNA polymerase IV (351 aa).

Positions 4–185 (IIHVDMDCFF…LPLAKIPGVG (182 aa)) constitute a UmuC domain. Mg(2+) contacts are provided by Asp8 and Asp103. Glu104 is an active-site residue.

This sequence belongs to the DNA polymerase type-Y family. Monomer. Mg(2+) is required as a cofactor.

The protein localises to the cytoplasm. It carries out the reaction DNA(n) + a 2'-deoxyribonucleoside 5'-triphosphate = DNA(n+1) + diphosphate. Functionally, poorly processive, error-prone DNA polymerase involved in untargeted mutagenesis. Copies undamaged DNA at stalled replication forks, which arise in vivo from mismatched or misaligned primer ends. These misaligned primers can be extended by PolIV. Exhibits no 3'-5' exonuclease (proofreading) activity. May be involved in translesional synthesis, in conjunction with the beta clamp from PolIII. The sequence is that of DNA polymerase IV from Escherichia coli O139:H28 (strain E24377A / ETEC).